A 275-amino-acid polypeptide reads, in one-letter code: MEILYSPAKINLGLWIVDKRPDGYHEIFTLYHTLDFYDRIIIQEHPFLEVKTSMPEIKQEENIVYKAISLFESYTGIEQNLQVIIEKNIPVGGGLGGGSSNAATVLNYLNKKHDNILPEEKLFEIAVKLGADVPFFLKGGFAIGEGIGEKLTFLPKTLNEEIFIIYPNIKSDTKTVYSKVDKSILTNKGDLNIILSLINEYDIKKLEAYIENKLGNIALDLYPEIKEAYDFLNYLGFSPKVSGSGSCVYVIGRPTAEVEKAAAIKGWRLIKTKLK.

The active site involves Lys9. ATP is bound at residue 90-100; sequence PVGGGLGGGSS. The active site involves Asp132.

Belongs to the GHMP kinase family. IspE subfamily.

The enzyme catalyses 4-CDP-2-C-methyl-D-erythritol + ATP = 4-CDP-2-C-methyl-D-erythritol 2-phosphate + ADP + H(+). It functions in the pathway isoprenoid biosynthesis; isopentenyl diphosphate biosynthesis via DXP pathway; isopentenyl diphosphate from 1-deoxy-D-xylulose 5-phosphate: step 3/6. Its function is as follows. Catalyzes the phosphorylation of the position 2 hydroxy group of 4-diphosphocytidyl-2C-methyl-D-erythritol. In Sulfurihydrogenibium sp. (strain YO3AOP1), this protein is 4-diphosphocytidyl-2-C-methyl-D-erythritol kinase.